The chain runs to 255 residues: Adenosine 5'-phosphosulfate reductase (255 aa).

The interval 1–39 is disordered; it reads MMTAEVRTPEQGGGPLTTEPRAPRSAPGHADASAPAFGP. Residues cysteine 137, cysteine 138, cysteine 220, and cysteine 223 each coordinate [4Fe-4S] cluster. Cysteine 246 functions as the Nucleophile; cysteine thiosulfonate intermediate in the catalytic mechanism.

Belongs to the PAPS reductase family. CysH subfamily. [4Fe-4S] cluster serves as cofactor.

It is found in the cytoplasm. It carries out the reaction [thioredoxin]-disulfide + sulfite + AMP + 2 H(+) = adenosine 5'-phosphosulfate + [thioredoxin]-dithiol. Its pathway is sulfur metabolism; hydrogen sulfide biosynthesis; sulfite from sulfate. Functionally, catalyzes the formation of sulfite from adenosine 5'-phosphosulfate (APS) using thioredoxin as an electron donor. The chain is Adenosine 5'-phosphosulfate reductase from Deinococcus radiodurans (strain ATCC 13939 / DSM 20539 / JCM 16871 / CCUG 27074 / LMG 4051 / NBRC 15346 / NCIMB 9279 / VKM B-1422 / R1).